A 437-amino-acid chain; its full sequence is Endoplasmic reticulum protein SC65 (437 aa).

The N-terminal stretch at 1-18 (MARVAWGLLWLLLGSAGA) is a signal peptide. A glycan (N-linked (GlcNAc...) asparagine) is linked at Asn-361. Acidic residues-rich tracts occupy residues 381–413 (DEMELEETEPPLEPEDALSDAEFEGEGDYEEGM) and 428–437 (AEAEPEPELA). The tract at residues 381 to 437 (DEMELEETEPPLEPEDALSDAEFEGEGDYEEGMYADWWQEPDAKGDEAEAEPEPELA) is disordered.

This sequence belongs to the leprecan family. Interacts with PLOD1, P3H3 and PPIB. Identified in a complex with PLOD1 and P3H3. As to expression, detected in fibroblasts (at protein level). Detected in spleen, prostate, testis, ovary, colon, pancreas, kidney, placenta and heart.

It is found in the endoplasmic reticulum. In terms of biological role, part of a complex composed of PLOD1, P3H3 and P3H4 that catalyzes hydroxylation of lysine residues in collagen alpha chains and is required for normal assembly and cross-linking of collagen fibrils. Required for normal bone density and normal skin stability via its role in hydroxylation of lysine residues in collagen alpha chains and in collagen fibril assembly. This is Endoplasmic reticulum protein SC65 from Homo sapiens (Human).